Consider the following 608-residue polypeptide: MASDAVKYMPIHGGGTTATTAADIKSFFSALKPKKTSTFAYAFVITFVSFTLFFAFSPSPNSSSPWFSNIFTSSSTTTTSDNTSGSQFSSIFSYILPNVTSTKPTNRSSDATDSLSVNATSPPLNSNSKNGTLQTPAPETHTPVAKNTTFESPIVNGTNPDAKNNTSSHPLLSDKSSTTGSNNQSRTTADTETVNRNQTTSPAPSKAPVSVDLKTNSSSNSSTASSTPKKQTKTVDLVSSVKQEIEKWSESLKNCEFFDGEWIKDDSYPLYKPGSCNLIDEQFNCITNGRPDKDFQKLKWKPKKCSLPRLNGAILLEMLRGRRLVFVGDSLNRNMWESLVCILKGSVKDETKVYEARGRHHFRGEAEYSFVFQDYNCTVEFFVSPFLVQEWEIVDKKGTKKETLRLDLVGKSSEQYKGADVIVFNTGHWWTHEKTSKGEDYYQEGSNVYHELAVLEAFRKALTTWGRWVEKNVNPAKSLVFFRGYSASHFSGGQWNSGGACDSETEPIKNDTYLTPYPSKMKVLEKVLRGMKTPVTYLNITRLTDYRKDGHPSVYRKQSLSEKEKKSPLLYQDCSHWCLPGVPDSWNEILYAELIVKLNQLSQTQRKT.

A helical; Signal-anchor for type II membrane protein membrane pass occupies residues 38–58 (TFAYAFVITFVSFTLFFAFSP). 2 stretches are compositionally biased toward polar residues: residues 101 to 137 (STKPTNRSSDATDSLSVNATSPPLNSNSKNGTLQTPA) and 145 to 203 (AKNT…TSPA). The disordered stretch occupies residues 101-236 (STKPTNRSSD…TPKKQTKTVD (136 aa)). The span at 215 to 227 (TNSSSNSSTASST) shows a compositional bias: low complexity. A GDS motif motif is present at residues 328-330 (GDS). Residues 573 to 587 (DCSHWCLPGVPDSWN) carry the DCXHWCLPGXXDXWN motif motif.

The protein belongs to the PC-esterase family. TBL subfamily. As to expression, expressed in leaf vasculature, growing part of the root, expanding inflorescence stems and trichomes.

The protein resides in the membrane. Functionally, required during cellulose deposition. May act as a bridging protein that binds pectin and other cell wall polysaccharides. Probably involved in maintaining esterification of pectins. May be involved in the specific O-acetylation of cell wall polymers. The polypeptide is Protein trichome birefringence (TBR) (Arabidopsis thaliana (Mouse-ear cress)).